The chain runs to 471 residues: Nitrosourea synthase (471 aa).

Residues 177-328 (MWLVQFAPDF…GRMAREKIIK (152 aa)) are HO-like. The Fe(2+) site is built by Glu189, Glu215, His225, Glu281, His311, Asp315, His318, His407, His409, and His448. Residues 397–459 (VEPRGELSNT…ANIESDECVY (63 aa)) are cupin.

Homodimer. Requires Fe(2+) as cofactor.

It carries out the reaction N(omega)-methyl-L-arginine + 2 NADH + 3 O2 + H(+) = N(delta)-hydroxy-N(omega)-methyl-N(omega)-nitroso-L-citrulline + 2 NAD(+) + 3 H2O. The catalysed reaction is N(omega)-methyl-L-arginine + NADH + O2 + H(+) = N(delta)-hydroxy-N(omega)-methyl-L-arginine + NAD(+) + H2O. It catalyses the reaction N(delta)-hydroxy-N(omega)-methyl-L-arginine + NADH + O2 = N(delta),N(omega')-dihydroxy-N(omega)-methyl-L-arginine + NAD(+) + H2O. The enzyme catalyses N(delta),N(omega')-dihydroxy-N(omega)-methyl-L-arginine + O2 = N(delta)-hydroxy-N(omega)-methyl-N(omega)-nitroso-L-citrulline + H2O. It carries out the reaction 2 N(delta)-hydroxy-N(omega)-methyl-N(omega)-nitroso-L-citrulline + AH2 = 2 N(delta)-hydroxy-N(omega)-methyl-L-citrulline + 2 nitric oxide + A. It functions in the pathway antibiotic biosynthesis. Involved in the biosynthesis of the glucosamine-nitrosourea antibiotic streptozotocin (SZN). Catalyzes a complex multi-step reaction: the overall reaction is an oxidative rearrangement of the guanidine group of N(omega)-methyl-L-arginine (L-NMA), generating an N-nitrosourea product. SznF first hydroxylates L-NMA to form N(delta)-hydroxy-N(omega)-methyl-L-arginine (L-HMA), which is further hydroxylated to give N(delta)-hydroxy-N(omega)-hydroxy-N(omega)-methyl-L-arginine (L-DHMA). Subsequently, an oxidative rearrangement converts this intermediate to N(delta)-hydroxy-N(omega)-methyl-N(omega)-nitroso-L-citrulline. This product is unstable, and degrades non-enzymically into nitric oxide and the denitrosated product N(delta)-hydroxy-N(omega)-methyl-L-citrulline. The polypeptide is Nitrosourea synthase (Streptomyces achromogenes subsp. streptozoticus).